The primary structure comprises 684 residues: Protein SEEDLING PLASTID DEVELOPMENT 1 (684 aa).

The transit peptide at M1–S78 directs the protein to the chloroplast. The segment at S33 to A91 is disordered. A compositionally biased stretch (low complexity) spans A50–P88. G220–T227 provides a ligand contact to ATP. Residues P651–D684 are disordered. The segment covering K657–S667 has biased composition (low complexity).

It belongs to the ycf45 family.

The protein localises to the plastid. Its subcellular location is the chloroplast membrane. It localises to the chloroplast envelope. In terms of biological role, required during eoplast (a highly reduced plastid type present during the degreening and dehydration stages of seed maturation) development in embryos and early stages of eoplast redifferentiation during seedling growth. The protein is Protein SEEDLING PLASTID DEVELOPMENT 1 of Arabidopsis thaliana (Mouse-ear cress).